Consider the following 242-residue polypeptide: Intraflagellar transport-associated protein (242 aa).

Residue serine 57 is modified to Phosphoserine.

Interacts with IFT122; the interaction associates IFTAP with IFT-A complex.

In terms of biological role, seems to play a role in ciliary BBSome localization, maybe through interaction with IFT-A complex. This Bos taurus (Bovine) protein is Intraflagellar transport-associated protein (IFTAP).